The following is a 149-amino-acid chain: 3-dehydroquinate dehydratase (149 aa).

Y26 acts as the Proton acceptor in catalysis. Substrate-binding residues include N77, H83, and D90. Catalysis depends on H103, which acts as the Proton donor. Substrate is bound by residues 104-105 and R114; that span reads LS.

The protein belongs to the type-II 3-dehydroquinase family. In terms of assembly, homododecamer.

It carries out the reaction 3-dehydroquinate = 3-dehydroshikimate + H2O. It functions in the pathway metabolic intermediate biosynthesis; chorismate biosynthesis; chorismate from D-erythrose 4-phosphate and phosphoenolpyruvate: step 3/7. Catalyzes a trans-dehydration via an enolate intermediate. In Edwardsiella ictaluri (strain 93-146), this protein is 3-dehydroquinate dehydratase.